The primary structure comprises 193 residues: MTVTPINPTNQPYKYVFVVIGPAGSGKTTMAKAVSEKLGFEYIEGDDLHPKANIEKMSQGHPLNDNDRWGWLHNCGGACAMELDKESIKGVVLTCSALKRSYRDILRSSLEHRPAILRFIYLAASRETLIKRTTSRKNHYMKADMVESQLAILEAPTADEKDVITISVENGKEQSEEECLDIVHKMVNENKQP.

21-28 is an ATP binding site; that stretch reads GPAGSGKT.

This sequence belongs to the gluconokinase GntK/GntV family.

The catalysed reaction is D-gluconate + ATP = 6-phospho-D-gluconate + ADP + H(+). It participates in carbohydrate acid metabolism; D-gluconate degradation. This chain is Probable gluconokinase, found in Schizosaccharomyces pombe (strain 972 / ATCC 24843) (Fission yeast).